The sequence spans 257 residues: Imidazole glycerol phosphate synthase subunit HisF (257 aa).

Active-site residues include Asp12 and Asp131.

This sequence belongs to the HisA/HisF family. In terms of assembly, heterodimer of HisH and HisF.

It is found in the cytoplasm. The enzyme catalyses 5-[(5-phospho-1-deoxy-D-ribulos-1-ylimino)methylamino]-1-(5-phospho-beta-D-ribosyl)imidazole-4-carboxamide + L-glutamine = D-erythro-1-(imidazol-4-yl)glycerol 3-phosphate + 5-amino-1-(5-phospho-beta-D-ribosyl)imidazole-4-carboxamide + L-glutamate + H(+). Its pathway is amino-acid biosynthesis; L-histidine biosynthesis; L-histidine from 5-phospho-alpha-D-ribose 1-diphosphate: step 5/9. Functionally, IGPS catalyzes the conversion of PRFAR and glutamine to IGP, AICAR and glutamate. The HisF subunit catalyzes the cyclization activity that produces IGP and AICAR from PRFAR using the ammonia provided by the HisH subunit. In Nocardia farcinica (strain IFM 10152), this protein is Imidazole glycerol phosphate synthase subunit HisF.